A 365-amino-acid polypeptide reads, in one-letter code: MESKSSSLPLFFQKPSGTQLLGLLSVLLVGLAVLISHQPQLNPSNILPLWVPVLVSAIVAGIFGMWIVPLLRRLKTGQIIREEGPQAHLKKAGTPTMGGLIFLPVGLAAGVIFAGFDPEAIAVALVTLAYGVIGWVDDWQVLRLKSNKGISPRMKLILQIAIAVVFCIWLALTAPELTTITFFAGLSLPLGVFFWALAGFAMVAESNATNLTDGVDGLAGGTGAIAFLGVGALALPAHPGLSLLCACLSGACLGFIYHNRNPAKVFMGDTGSLALGGGLAAAGILSGNIWGLLIISGIFCIEAVSVIAQVTYYKATKDETGQGKRLLKMAPIHHHLELSGWPETQIVGAFYLINLGLVLLSFILT.

The next 10 membrane-spanning stretches (helical) occupy residues 15–35 (PSGT…AVLI), 51–71 (VPVL…VPLL), 96–116 (TMGG…FAGF), 121–141 (IAVA…DWQV), 156–176 (LILQ…TAPE), 180–200 (ITFF…LAGF), 217–237 (GLAG…ALPA), 238–258 (HPGL…FIYH), 279–299 (LAAA…SGIF), and 344–364 (TQIV…SFIL).

This sequence belongs to the glycosyltransferase 4 family. MraY subfamily. It depends on Mg(2+) as a cofactor.

It is found in the cell inner membrane. The catalysed reaction is UDP-N-acetyl-alpha-D-muramoyl-L-alanyl-gamma-D-glutamyl-meso-2,6-diaminopimeloyl-D-alanyl-D-alanine + di-trans,octa-cis-undecaprenyl phosphate = di-trans,octa-cis-undecaprenyl diphospho-N-acetyl-alpha-D-muramoyl-L-alanyl-D-glutamyl-meso-2,6-diaminopimeloyl-D-alanyl-D-alanine + UMP. Its pathway is cell wall biogenesis; peptidoglycan biosynthesis. Functionally, catalyzes the initial step of the lipid cycle reactions in the biosynthesis of the cell wall peptidoglycan: transfers peptidoglycan precursor phospho-MurNAc-pentapeptide from UDP-MurNAc-pentapeptide onto the lipid carrier undecaprenyl phosphate, yielding undecaprenyl-pyrophosphoryl-MurNAc-pentapeptide, known as lipid I. This chain is Phospho-N-acetylmuramoyl-pentapeptide-transferase, found in Picosynechococcus sp. (strain ATCC 27264 / PCC 7002 / PR-6) (Agmenellum quadruplicatum).